The following is a 251-amino-acid chain: CDP-diacylglycerol pyrophosphatase (251 aa).

A helical transmembrane segment spans residues 4 to 24 (AGLLFLVMIVIAVVASGIGYW).

It belongs to the Cdh family.

It is found in the cell inner membrane. It carries out the reaction a CDP-1,2-diacyl-sn-glycerol + H2O = a 1,2-diacyl-sn-glycero-3-phosphate + CMP + 2 H(+). It participates in phospholipid metabolism; CDP-diacylglycerol degradation; phosphatidate from CDP-diacylglycerol: step 1/1. The polypeptide is CDP-diacylglycerol pyrophosphatase (Escherichia coli O8 (strain IAI1)).